The sequence spans 229 residues: DNA repair protein RecO (229 aa).

This sequence belongs to the RecO family.

Its function is as follows. Involved in DNA repair and RecF pathway recombination. The polypeptide is DNA repair protein RecO (Legionella pneumophila (strain Corby)).